The chain runs to 490 residues: Cytochrome P450 2C6 (490 aa).

Residues K249 and K375 each carry the N6-acetyllysine modification. C435 is a binding site for heme.

This sequence belongs to the cytochrome P450 family. It depends on heme as a cofactor.

Its subcellular location is the endoplasmic reticulum membrane. It localises to the microsome membrane. The catalysed reaction is an organic molecule + reduced [NADPH--hemoprotein reductase] + O2 = an alcohol + oxidized [NADPH--hemoprotein reductase] + H2O + H(+). Functionally, cytochromes P450 are a group of heme-thiolate monooxygenases. In liver microsomes, this enzyme is involved in an NADPH-dependent electron transport pathway. It oxidizes a variety of structurally unrelated compounds, including steroids, fatty acids, and xenobiotics. In Rattus norvegicus (Rat), this protein is Cytochrome P450 2C6 (Cyp2c6).